An 82-amino-acid chain; its full sequence is Metallothionein-like protein 2A (82 aa).

It belongs to the metallothionein superfamily. Type 15 family. In terms of tissue distribution, expressed in stems, leaves, rachis, inflorescences and seeds.

Functionally, metallothioneins have a high content of cysteine residues that bind various heavy metals. This is Metallothionein-like protein 2A (MT2A) from Oryza sativa subsp. japonica (Rice).